The chain runs to 255 residues: 4-hydroxy-tetrahydrodipicolinate reductase (255 aa).

Residues 9–14 (GFKGKM), 89–91 (GTT), and 115–118 (APNF) contribute to the NAD(+) site. H145 functions as the Proton donor/acceptor in the catalytic mechanism. H146 is a (S)-2,3,4,5-tetrahydrodipicolinate binding site. The active-site Proton donor is the K149. 155 to 156 (GT) is a binding site for (S)-2,3,4,5-tetrahydrodipicolinate.

This sequence belongs to the DapB family.

The protein localises to the cytoplasm. The catalysed reaction is (S)-2,3,4,5-tetrahydrodipicolinate + NAD(+) + H2O = (2S,4S)-4-hydroxy-2,3,4,5-tetrahydrodipicolinate + NADH + H(+). The enzyme catalyses (S)-2,3,4,5-tetrahydrodipicolinate + NADP(+) + H2O = (2S,4S)-4-hydroxy-2,3,4,5-tetrahydrodipicolinate + NADPH + H(+). It functions in the pathway amino-acid biosynthesis; L-lysine biosynthesis via DAP pathway; (S)-tetrahydrodipicolinate from L-aspartate: step 4/4. Catalyzes the conversion of 4-hydroxy-tetrahydrodipicolinate (HTPA) to tetrahydrodipicolinate. The polypeptide is 4-hydroxy-tetrahydrodipicolinate reductase (Streptococcus suis (strain 98HAH33)).